The chain runs to 127 residues: Glycine cleavage system H protein (127 aa).

One can recognise a Lipoyl-binding domain in the interval 24 to 105 (TAVVGITDFA…YNEGWIVKMK (82 aa)). Lys65 carries the N6-lipoyllysine modification.

The protein belongs to the GcvH family. In terms of assembly, the glycine cleavage system is composed of four proteins: P, T, L and H. The cofactor is (R)-lipoate.

Its function is as follows. The glycine cleavage system catalyzes the degradation of glycine. The H protein shuttles the methylamine group of glycine from the P protein to the T protein. This is Glycine cleavage system H protein from Chlorobaculum parvum (strain DSM 263 / NCIMB 8327) (Chlorobium vibrioforme subsp. thiosulfatophilum).